A 159-amino-acid chain; its full sequence is Phosphopantetheine adenylyltransferase (159 aa).

Thr-9 is a substrate binding site. Residues 9-10 (TF) and His-17 each bind ATP. Substrate is bound by residues Lys-41, Leu-73, and Arg-87. ATP is bound by residues 88-90 (GLR), Glu-98, and 123-129 (YSFISST).

Belongs to the bacterial CoaD family. Homohexamer. It depends on Mg(2+) as a cofactor.

The protein localises to the cytoplasm. It carries out the reaction (R)-4'-phosphopantetheine + ATP + H(+) = 3'-dephospho-CoA + diphosphate. The protein operates within cofactor biosynthesis; coenzyme A biosynthesis; CoA from (R)-pantothenate: step 4/5. In terms of biological role, reversibly transfers an adenylyl group from ATP to 4'-phosphopantetheine, yielding dephospho-CoA (dPCoA) and pyrophosphate. The polypeptide is Phosphopantetheine adenylyltransferase (Pseudomonas syringae pv. syringae (strain B728a)).